The following is a 227-amino-acid chain: Cytochrome c oxidase subunit 2 (227 aa).

Topologically, residues 1 to 14 (MAYPLQLGFQDAVS) are mitochondrial intermembrane. The chain crosses the membrane as a helical span at residues 15–45 (PIMEELLYFHDHTLMIVFLISSLVLYIITLM). Over 46-59 (LTTKLTHTNTMNAQ) the chain is Mitochondrial matrix. A helical membrane pass occupies residues 60–87 (EVETVWTILPAIILILIALPSLRILYMM). The Mitochondrial intermembrane segment spans residues 88–227 (DEINNPSLTV…TFEKWTASLL (140 aa)). Positions 161, 196, 198, 200, 204, and 207 each coordinate Cu cation. Glutamate 198 serves as a coordination point for Mg(2+).

It belongs to the cytochrome c oxidase subunit 2 family. In terms of assembly, component of the cytochrome c oxidase (complex IV, CIV), a multisubunit enzyme composed of 14 subunits. The complex is composed of a catalytic core of 3 subunits MT-CO1, MT-CO2 and MT-CO3, encoded in the mitochondrial DNA, and 11 supernumerary subunits COX4I, COX5A, COX5B, COX6A, COX6B, COX6C, COX7A, COX7B, COX7C, COX8 and NDUFA4, which are encoded in the nuclear genome. The complex exists as a monomer or a dimer and forms supercomplexes (SCs) in the inner mitochondrial membrane with NADH-ubiquinone oxidoreductase (complex I, CI) and ubiquinol-cytochrome c oxidoreductase (cytochrome b-c1 complex, complex III, CIII), resulting in different assemblies (supercomplex SCI(1)III(2)IV(1) and megacomplex MCI(2)III(2)IV(2)). Found in a complex with TMEM177, COA6, COX18, COX20, SCO1 and SCO2. Interacts with TMEM177 in a COX20-dependent manner. Interacts with COX20. Interacts with COX16. Requires Cu cation as cofactor.

It is found in the mitochondrion inner membrane. The catalysed reaction is 4 Fe(II)-[cytochrome c] + O2 + 8 H(+)(in) = 4 Fe(III)-[cytochrome c] + 2 H2O + 4 H(+)(out). Its function is as follows. Component of the cytochrome c oxidase, the last enzyme in the mitochondrial electron transport chain which drives oxidative phosphorylation. The respiratory chain contains 3 multisubunit complexes succinate dehydrogenase (complex II, CII), ubiquinol-cytochrome c oxidoreductase (cytochrome b-c1 complex, complex III, CIII) and cytochrome c oxidase (complex IV, CIV), that cooperate to transfer electrons derived from NADH and succinate to molecular oxygen, creating an electrochemical gradient over the inner membrane that drives transmembrane transport and the ATP synthase. Cytochrome c oxidase is the component of the respiratory chain that catalyzes the reduction of oxygen to water. Electrons originating from reduced cytochrome c in the intermembrane space (IMS) are transferred via the dinuclear copper A center (CU(A)) of subunit 2 and heme A of subunit 1 to the active site in subunit 1, a binuclear center (BNC) formed by heme A3 and copper B (CU(B)). The BNC reduces molecular oxygen to 2 water molecules using 4 electrons from cytochrome c in the IMS and 4 protons from the mitochondrial matrix. The polypeptide is Cytochrome c oxidase subunit 2 (MT-CO2) (Hippopotamus amphibius (Hippopotamus)).